The following is a 145-amino-acid chain: Oleosin L (145 aa).

An N-acetylalanine modification is found at Ala2. 2 consecutive transmembrane segments (helical) span residues 36–56 and 59–79; these read GSLLVLSGLTLAGTVIALTIA and LLVIFSPVLVPAVITIFLLGA. A Proline-knot motif is present at residues 58–69; sequence PLLVIFSPVLVP. Over residues 123–132 the composition is skewed to basic and acidic residues; the sequence is KAREMKDRAE. The interval 123-145 is disordered; it reads KAREMKDRAEQFSQQPVAGSQTS. The span at 133-145 shows a compositional bias: polar residues; that stretch reads QFSQQPVAGSQTS.

Belongs to the oleosin family. As to expression, expressed in seeds (at protein level).

It is found in the lipid droplet. The protein resides in the membrane. Functionally, may have a structural role to stabilize the lipid body during desiccation of the seed by preventing coalescence of the oil. Probably interacts with both lipid and phospholipid moieties of lipid bodies. May also provide recognition signals for specific lipase anchorage in lipolysis during seedling growth. The polypeptide is Oleosin L (Sesamum indicum (Oriental sesame)).